The following is a 326-amino-acid chain: D-amino-acid oxidase (326 aa).

Positions 18, 19, 46, 47, 48, 52, 53, 162, and 179 each coordinate FAD. 2 residues coordinate D-proline: Tyr-222 and Arg-277. D-serine contacts are provided by Tyr-222 and Arg-277. FAD-binding residues include Arg-277, Gly-303, Gly-304, Gly-306, and Thr-308. Gly-304 provides a ligand contact to D-proline. Residue Gly-304 participates in D-serine binding.

The protein belongs to the DAMOX/DASOX family. In terms of assembly, monomer. FAD is required as a cofactor.

The protein resides in the cytoplasm. Its subcellular location is the secreted. The protein localises to the cell wall. It catalyses the reaction a D-alpha-amino acid + O2 + H2O = a 2-oxocarboxylate + H2O2 + NH4(+). The enzyme catalyses D-valine + O2 + H2O = 3-methyl-2-oxobutanoate + H2O2 + NH4(+). It carries out the reaction D-leucine + O2 + H2O = 4-methyl-2-oxopentanoate + H2O2 + NH4(+). The catalysed reaction is D-isoleucine + O2 + H2O = (R)-3-methyl-2-oxopentanoate + H2O2 + NH4(+). It catalyses the reaction D-tyrosine + O2 + H2O = 3-(4-hydroxyphenyl)pyruvate + H2O2 + NH4(+). The enzyme catalyses D-threonine + O2 + H2O = (S)-3-hydroxy-2-oxobutanoate + H2O2 + NH4(+). Its activity is regulated as follows. Inhibited by benzoate and phenylmethylsulfonyl fluoride (PMSF). Weakly inhibited by anthranilate, crotonate, and the amino acid-modifying agents dithionitrobenzoic acid and diethyl pyrocarbonate. Not inhibited by malonate, meso-tartrate, D-malate, or the amino acid-modifying agents iodoacetic acid or butane-2,3-dione. Catalyzes the oxidative deamination of D-amino acids with broad substrate specificity. This is D-amino-acid oxidase from Rubrobacter xylanophilus (strain DSM 9941 / JCM 11954 / NBRC 16129 / PRD-1).